Reading from the N-terminus, the 302-residue chain is Pentatricopeptide repeat-containing protein At4g38150 (302 aa).

The span at 26–40 (SATRFLSTGDNGQVD) shows a compositional bias: polar residues. Disordered regions lie at residues 26 to 82 (SATR…TTLS) and 94 to 116 (VNQDSRETPKPEQYPQEPLPPPE). Over residues 54-67 (LRGERSSNSHREPP) the composition is skewed to basic and acidic residues. PPR repeat units follow at residues 130 to 164 (LIPNAVAMLDGLCKDGLVQEAMKLFGLMRDKGTIP), 165 to 199 (EVVIYTAVVEAFCKAHKIEDAKRIFRKMQNNGIAP), 200 to 234 (NAFSYGVLVQGLYNCNMLDDAVAFCSEMLESGHSP), and 235 to 269 (NVPTFVELVDALCRVKGVEQAQSAIDTLNQKGFAV).

The protein belongs to the PPR family. P subfamily.

In Arabidopsis thaliana (Mouse-ear cress), this protein is Pentatricopeptide repeat-containing protein At4g38150.